Reading from the N-terminus, the 312-residue chain is Methionyl-tRNA formyltransferase (312 aa).

113 to 116 (SILP) contributes to the (6S)-5,6,7,8-tetrahydrofolate binding site.

Belongs to the Fmt family.

It carries out the reaction L-methionyl-tRNA(fMet) + (6R)-10-formyltetrahydrofolate = N-formyl-L-methionyl-tRNA(fMet) + (6S)-5,6,7,8-tetrahydrofolate + H(+). Functionally, attaches a formyl group to the free amino group of methionyl-tRNA(fMet). The formyl group appears to play a dual role in the initiator identity of N-formylmethionyl-tRNA by promoting its recognition by IF2 and preventing the misappropriation of this tRNA by the elongation apparatus. The chain is Methionyl-tRNA formyltransferase from Hydrogenovibrio crunogenus (strain DSM 25203 / XCL-2) (Thiomicrospira crunogena).